We begin with the raw amino-acid sequence, 217 residues long: Coiled-coil domain-containing protein 124-B (217 aa).

A disordered region spans residues 1–123; sequence MPKKFQSENT…EKPKTHLEIP (123 aa). 3 stretches are compositionally biased toward basic and acidic residues: residues 18–45, 52–74, and 98–123; these read RKAE…DDKH, RKEE…QRLL, and QIEE…LEIP. Residues 41–83 adopt a coiled-coil conformation; sequence DDDKHVVRKEHRKEEKEKKRLELLERKKESQRLLDEEDSKMKG.

This sequence belongs to the CCDC124 family. Associates with translationally inactive ribosomes in the nonrotated state.

Its subcellular location is the cytoplasm. It is found in the cytoskeleton. The protein localises to the microtubule organizing center. It localises to the centrosome. The protein resides in the midbody. In terms of biological role, ribosome-binding protein involved in ribosome hibernation: associates with translationally inactive ribosomes and stabilizes the nonrotated conformation of the 80S ribosome, thereby promoting ribosome preservation and storage. The chain is Coiled-coil domain-containing protein 124-B (ccdc124-b) from Xenopus laevis (African clawed frog).